A 313-amino-acid polypeptide reads, in one-letter code: Ribosomal protein L11 methyltransferase (313 aa).

S-adenosyl-L-methionine-binding residues include threonine 164, glycine 185, aspartate 207, and asparagine 249.

It belongs to the methyltransferase superfamily. PrmA family.

The protein localises to the cytoplasm. It catalyses the reaction L-lysyl-[protein] + 3 S-adenosyl-L-methionine = N(6),N(6),N(6)-trimethyl-L-lysyl-[protein] + 3 S-adenosyl-L-homocysteine + 3 H(+). In terms of biological role, methylates ribosomal protein L11. In Clostridium perfringens (strain 13 / Type A), this protein is Ribosomal protein L11 methyltransferase.